Reading from the N-terminus, the 571-residue chain is Plastidial pyruvate kinase 3, chloroplastic (571 aa).

Residues 1-55 (MAAYGQISSGMTVDPQVLSSSRNIGVSLSPLRRTLIGAGVRSTSISLRQCSLSVR) constitute a chloroplast transit peptide. Residue arginine 129 participates in substrate binding. K(+) is bound by residues asparagine 131, serine 133, aspartate 164, and threonine 165. 131–134 (NMSH) serves as a coordination point for ATP. Arginine 171 serves as a coordination point for ATP. Residue lysine 314 participates in substrate binding. Residue glutamate 316 participates in Mg(2+) binding. The substrate site is built by glycine 339, aspartate 340, and threonine 372. Aspartate 340 provides a ligand contact to Mg(2+).

This sequence belongs to the pyruvate kinase family. Oligomer of alpha and beta subunits. Requires Mg(2+) as cofactor. The cofactor is K(+). Expressed at low levels in roots, leaves, inflorescences, siliques, pollen, seeds and flowers.

It is found in the plastid. The protein resides in the chloroplast stroma. The enzyme catalyses pyruvate + ATP = phosphoenolpyruvate + ADP + H(+). It participates in carbohydrate degradation; glycolysis; pyruvate from D-glyceraldehyde 3-phosphate: step 5/5. Required for plastidial pyruvate kinase activity. The protein is Plastidial pyruvate kinase 3, chloroplastic (PKP3) of Arabidopsis thaliana (Mouse-ear cress).